The sequence spans 600 residues: Single-strand DNA endonuclease 1 (600 aa).

The interval 1-97 (MGVKYLWDVL…KRRLKARFEI (97 aa)) is N-domain. Positions 2–97 (GVKYLWDVLE…KRRLKARFEI (96 aa)) are XPG-N domain. Mg(2+) is bound by residues Asp-30, Asp-76, Glu-142, Glu-144, Asp-163, Asp-165, and Asp-215. The XPG-I domain stretch occupies residues 130-215 (STLGILCLDG…IALALLLGSD (86 aa)). I-domain stretches follow at residues 130–218 (STLG…DYSQ) and 130–219 (STLG…YSQG). The segment at 215-353 (DYSQGVRGLR…ILPKVAERNL (139 aa)) is 5'-3' exonuclease domain. The disordered stretch occupies residues 433 to 458 (MAAKKKKPKPKQKQKETSSPTKSSSL). The span at 435–444 (AKKKKPKPKQ) shows a compositional bias: basic residues.

It belongs to the XPG/RAD2 endonuclease family. GEN subfamily. Requires Mg(2+) as cofactor.

It localises to the nucleus. Its function is as follows. Endonuclease which cleaves flap structures at the junction between single-stranded DNA and double-stranded DNA with a specific cleavage site in the 5' overhang strand exactly one nucleotide 3' of the branch point. Structure- and sequence-specific nuclease that resolves holliday junctions (HJs) by symmetrically oriented incisions in two opposing strands near the junction point, thus leading to ligatable products; HJs are physical links between homologous DNA molecules that arise as central intermediary structures during homologous recombination and repair in meiotic and somatic cells. Structure-specific nuclease with 5'-flap endonuclease activity, preferentially cleaving static flaps 5' overhang strand exactly one nucleotide in the 3' direction of the branch point and, to lower extent, on the two neighboring positions. Also able to cleave double-stranded flap strand 1 one nucleotide in the 3' direction of the branch point. Together with MUS81, essential for the resolution of toxic replication structures to ensure genome stability, and to maintain telomere integrity and replication. In Arabidopsis thaliana (Mouse-ear cress), this protein is Single-strand DNA endonuclease 1.